The following is a 78-amino-acid chain: U-scoloptoxin(13)-Er1a (78 aa).

Residues 1–24 form the signal peptide; it reads MFPSWSTTFVLCMGLCSLMNGALA.

Belongs to the scoloptoxin-13 family. Post-translationally, contains 4 disulfide bonds. In terms of tissue distribution, expressed by the venom gland.

It localises to the secreted. This is U-scoloptoxin(13)-Er1a from Ethmostigmus rubripes (Giant centipede).